Reading from the N-terminus, the 923-residue chain is Inorganic phosphate transporter PHO87 (923 aa).

The SPX domain occupies 1-334 (MRFSHFLKYN…HMNTRQELIE (334 aa)). Residues 1-461 (MRFSHFLKYN…KLFFGKRAMK (461 aa)) are Extracellular-facing. Disordered regions lie at residues 40–74 (ETPTGDLNDDADSQTPGPIADIESNIAAGEPSSSK) and 86–107 (FGSKTPSGSKRGDSDEKAIDGN). Residues 95–104 (KRGDSDEKAI) are compositionally biased toward basic and acidic residues. Lys-102 participates in a covalent cross-link: Glycyl lysine isopeptide (Lys-Gly) (interchain with G-Cter in ubiquitin). N-linked (GlcNAc...) asparagine glycosylation is found at Asn-162, Asn-202, and Asn-274. Residues 462–482 (IGFIIIVTGVLLGVKTFNDPV) form a helical membrane-spanning segment. Topologically, residues 483-493 (EHRCMALVECC) are cytoplasmic. A helical membrane pass occupies residues 494 to 514 (AFLWASEAIPLHITGLLVPLL). The Extracellular portion of the chain corresponds to 515 to 537 (TVLFRVLKDDDGKVMGAAAASTE). The helical transmembrane segment at 538 to 558 (ILGTMWSSTIMILLAGFTLGE) threads the bilayer. At 559–583 (ALSQYNVAKVLASWLLALAGTKPRN) the chain is on the cytoplasmic side. Residues 584 to 604 (VLLMAMSVVFFLSMWISNVAS) form a helical membrane-spanning segment. Over 605 to 627 (PVLTYSLLTPLLDPLDYTSPFAK) the chain is Extracellular. Residues 628-648 (ALVMGVALSADIGGMASPISS) form a helical membrane-spanning segment. Residues 649 to 667 (PQNIISMQYLKPYGIGWGQ) are Cytoplasmic-facing. Residues 668–688 (FFAVALPTGILSMLCSWALMI) form a helical membrane-spanning segment. At 689–707 (LTFKIGKTKLEKFKPIRTR) the chain is on the extracellular side. The helical transmembrane segment at 708-728 (FTIKQYFIIIVTIATILLWCV) threads the bilayer. At 729–735 (ESQIESA) the chain is on the cytoplasmic side. Residues 736–756 (FGSSGEIAVIPIVLFFGTGLL) form a helical membrane-spanning segment. Residues 757–767 (STKDFNTFPWS) are Extracellular-facing. A helical membrane pass occupies residues 768 to 788 (IVVLAMGGIALGKAVSSSGLL). Over 789 to 802 (VTIARALQKKIQND) the chain is Cytoplasmic. The chain crosses the membrane as a helical span at residues 803–823 (GVFAILCIFGILMLVVGTFVS). The Extracellular portion of the chain corresponds to 824-849 (HTVSAIIIIPLVQEVGDKLSDPKAAP). A helical membrane pass occupies residues 850–870 (ILVFGCALLASCGMGLASSGF). At 871-898 (PNVTAISMTDKKGNRWLTVGAFISRGVP) the chain is on the cytoplasmic side. A helical membrane pass occupies residues 899-919 (ASLLAFVCVITLGYGISSSVL). At 920 to 923 (KGST) the chain is on the extracellular side.

It belongs to the CitM (TC 2.A.11) transporter family.

The protein localises to the membrane. Involved in the uptake of inorganic phosphate. This Saccharomyces cerevisiae (strain ATCC 204508 / S288c) (Baker's yeast) protein is Inorganic phosphate transporter PHO87 (PHO87).